Consider the following 488-residue polypeptide: 1-aminocyclopropane-1-carboxylate synthase-like protein 1 (488 aa).

The residue at position 273 (lysine 273) is an N6-(pyridoxal phosphate)lysine.

This sequence belongs to the class-I pyridoxal-phosphate-dependent aminotransferase family. As to quaternary structure, homodimer. In terms of tissue distribution, expressed in young leaves and flowers. Not expressed in roots.

This Arabidopsis thaliana (Mouse-ear cress) protein is 1-aminocyclopropane-1-carboxylate synthase-like protein 1 (ACS1).